Consider the following 411-residue polypeptide: MAEAPVDLSTGDNLEQKILQVLSDDGGPVKIGQLVKKCQVPKKTLNQVLYRLKKEDRVSSPEPATWSIGGAASGDGAPAIPENSSAQPSLDERILRFLEANGPHRALHIAKALGMTTAKEVNPLLYSMRNKHLLSYDGQTWKIYHSRQEGQDIAHSGVTQESPAIICQHNPVNMICQQGANSHISIANSNAIQIGHGNVIVREKACGEPGPRTSHPLPLAWDASAQDMPPVAHGAQYIYMDKSLLQQVQLGHHNEMSLVGDAGKHPSYSFSDSPPEVSTTTADPGASFNMQTFEPGPHPEGDTVQTVHIKSCFLEDATIGNGNKMTIHLRSKGEVMESGDSEEPKKEDTGTSSEATPPRSCQHTPSDSMLPTSELRAMALGDSSPQTTEPVLREHEVQDIESSQDTGLSKQ.

Z-binding domains are found at residues 8 to 70 and 84 to 148; these read LSTG…SIGG and SSAQ…HSRQ. Residues K17 and K43 each participate in a glycyl lysine isopeptide (Lys-Gly) (interchain with G-Cter in ubiquitin) cross-link. A disordered region spans residues 60 to 86; it reads SPEPATWSIGGAASGDGAPAIPENSSA. Short sequence motifs (RIP homotypic interaction motif (RHIM)) lie at residues 188–205 and 237–261; these read NSNA…REKA and YIYM…LVGD. Disordered regions lie at residues 263 to 303 and 332 to 411; these read GKHP…EGDT and KGEV…LSKQ. 3 stretches are compositionally biased toward polar residues: residues 268–292, 350–371, and 400–411; these read YSFS…NMQT, GTSS…SMLP, and IESSQDTGLSKQ.

Homodimer. Interacts (via RIP homotypic interaction motif) with RIPK3; leading to RIPK3 activation and necroptosis; interaction is enhanced by CASP6. Interacts (via RIP homotypic interaction motif) with RIPK1. Component of the AIM2 PANoptosome complex, a multiprotein complex that drives inflammatory cell death (PANoptosis). As to quaternary structure, (Microbial infection) Interacts (via RIP homotypic interaction motif) with murid herpesvirus protein RIR1 (via RIP homotypic interaction motif); leading to inhibition of ZBP1-dependent necroptosis. In terms of assembly, (Microbial infection) Interacts with vaccinia virus E3 protein; leading to inhibit ZBP1-dependent necroptosis. Ubiquitinated; polyubiquitinated following influenza A virus (IAV) infection. Post-translationally, phosphorylated. In terms of tissue distribution, expressed in lung, spleen and liver. Lower levels were seen in heart, kidney and testis. Expression is greatly up-regulated in tumor stromal cells and activated macrophages.

It localises to the cytoplasm. The protein resides in the nucleus. Its activity is regulated as follows. ZBP1-dependent necroptosis is normally inhibited by RIPK1: RIPK1 inhibits the ZBP1-induced activation of RIPK3 via FADD-mediated recruitment of CASP8, which cleaves RIPK1 and limits TNF-induced necroptosis. Functionally, key innate sensor that recognizes and binds Z-RNA structures, which are produced by a number of viruses, such as herpesvirus, orthomyxovirus or flavivirus, and triggers different forms of cell death. ZBP1 acts as an essential mediator of pyroptosis, necroptosis and apoptosis (PANoptosis), an integral part of host defense against pathogens, by activating RIPK3, caspase-8 (CASP8), and the NLRP3 inflammasome. Key activator of necroptosis, a programmed cell death process in response to death-inducing TNF-alpha family members, via its ability to bind Z-RNA: once activated upon Z-RNA-binding, ZBP1 interacts and stimulates RIPK3 kinase, which phosphorylates and activates MLKL, triggering execution of programmed necrosis. In addition to TNF-induced necroptosis, necroptosis can also take place in the nucleus in response to orthomyxoviruses infection: ZBP1 recognizes and binds Z-RNA structures that are produced in infected nuclei by orthomyxoviruses, such as the influenza A virus (IAV), leading to ZBP1 activation, RIPK3 stimulation and subsequent MLKL phosphorylation, triggering disruption of the nuclear envelope and leakage of cellular DNA into the cytosol. ZBP1-dependent cell death in response to IAV infection promotes interleukin-1 alpha (IL1A) induction in an NLRP3-inflammasome-independent manner: IL1A expression is required for the optimal interleukin-1 beta (IL1B) production, and together, these cytokines promote infiltration of inflammatory neutrophils to the lung, leading to the formation of neutrophil extracellular traps. In addition to its direct role in driving necroptosis via its ability to sense Z-RNAs, also involved in PANoptosis triggered in response to bacterial infection: component of the AIM2 PANoptosome complex, a multiprotein complex that triggers PANoptosis. Also acts as the apical sensor of fungal infection responsible for activating PANoptosis. Involved in CASP8-mediated cell death via its interaction with RIPK1 but independently of its ability to sense Z-RNAs. In some cell types, also able to restrict viral replication by promoting cell death-independent responses. In response to flavivirus infection in neurons, promotes a cell death-independent pathway that restricts viral replication: together with RIPK3, promotes a death-independent transcriptional program that modifies the cellular metabolism via up-regulation expression of the enzyme ACOD1/IRG1 and production of the metabolite itaconate. Itaconate inhibits the activity of succinate dehydrogenase, generating a metabolic state in neurons that suppresses replication of viral genomes. The chain is Z-DNA-binding protein 1 from Mus musculus (Mouse).